The sequence spans 4194 residues: Hybrid PKS-NRPS synthetase pydA (4194 aa).

The Ketosynthase family 3 (KS3) domain occupies 14 to 450 (REPIAVVGSG…GTNAHAIVEN (437 aa)). Catalysis depends on for beta-ketoacyl synthase activity residues Cys187, His326, and His370. Residues 565–887 (VFTGQGAQWA…QRGKDDVQAF (323 aa)) enclose the Malonyl-CoA:ACP transacylase (MAT) domain. The tract at residues 953–1088 (HPLLGTRTTD…GRVIVITGEA (136 aa)) is N-terminal hotdog fold. One can recognise a PKS/mFAS DH domain in the interval 953-1257 (HPLLGTRTTD…VVSFSEPTAE (305 aa)). The active-site Proton acceptor; for dehydratase activity is the His985. The C-terminal hotdog fold stretch occupies residues 1103–1257 (LVDIPEDRFY…VVSFSEPTAE (155 aa)). Asp1163 serves as the catalytic Proton donor; for dehydratase activity. A methyltransferase (cMeT) domain region spans residues 1302–1596 (YMRQLASLFP…FSGVDSTTHE (295 aa)). Residues 2141–2314 (TYVFFGLTSD…AGSILHIGAV (174 aa)) enclose the Ketoreductase (KR) domain. One can recognise a Carrier 1 domain in the interval 2421–2505 (TTAEEALEIV…ELVEFAVENM (85 aa)). An O-(pantetheine 4'-phosphoryl)serine modification is found at Ser2465. The tract at residues 2512-2583 (NMSDSLNAVP…ERDSSTASLE (72 aa)) is disordered. Residues 2526–2547 (APVIPASPPSGSVSSAPSSDPP) show a composition bias toward low complexity. Residues 2550–2565 (TAETSQHLSESSSKTS) are compositionally biased toward polar residues. The segment covering 2566–2577 (QPDEKQSEERDS) has biased composition (basic and acidic residues). The interval 2591–3023 (EKVLPVSPGQ…QILKDVSLFT (433 aa)) is condensation. Positions 3056–3467 (ANPPQEIALR…RIEGDTQIKL (412 aa)) are adenylation. Residues 3580–3660 (TQLTEAESEL…AMAAVIQDLS (81 aa)) enclose the Carrier 2 domain. Position 3620 is an O-(pantetheine 4'-phosphoryl)serine (Ser3620). Positions 3701 to 3920 (ITGATGFLGK…VDLISVERAA (220 aa)) constitute a Thioester reductase (TE) domain. 2 disordered regions span residues 4031–4110 (RRDK…DEQI) and 4163–4194 (KGEY…EPDD). Residues 4057-4072 (RGRDVSPRHPALDHPD) are compositionally biased toward basic and acidic residues. Residues 4174–4183 (EEAEEAEWQC) show a composition bias toward acidic residues. Basic and acidic residues predominate over residues 4184–4194 (DEGHGDGEPDD).

The protein in the C-terminal section; belongs to the NRP synthetase family. The cofactor is pantetheine 4'-phosphate.

Its pathway is mycotoxin biosynthesis. Functionally, hybrid PKS-NRPS synthetase; part of the gene cluster that mediates the biosynthesis of pyrrocidines, fungal natural products containing a macrocyclic para-cyclophane connected to a decahydrofluorene ring system that show potent antibiotic activities toward Gram-negative bacteria. Within the pathway, the PKS-NRPS pydA, with the help of the trans-enoyl reductase pydC, synthesize the polyketide-tyrosyl acyl thioester product which can be reductively off-loaded by the terminal reductase (R) domain in pydA. The PKS module of pydA acts in combination with the trans-acting enoyl reductase pydC to produce a methylated polyketide attached to the ACP domain. In parallel, the adenylation (A) domain of the NRPS module activated L-tyrosine, which is then transferred to the ACP domain. The condensation (C) domain subsequently link this group to the polyketide chain, forming an enzyme-bound amide. The alpha/beta hydrolase pydG is then required to catalyze the subsequent Knoevenagel condensation that affords the 3-pyrrolin-2-one ring, whereas the four proteins pydB, pydE, pydX and pydZ then function synergistically to form the cyclophane. PydB and the membrane-bound pydX and pydZ are lipid-binding proteins that can sequester and mold the pdyG product into the inverse S-shape. Binding of the medium chain reductase pydE to the complex would trigger the cascade oxidative cyclization. PydY is involved in the Diels-Alder cycloaddition that forms the decahydrofluorene core. Additional non-enzymatic hydroxylation yields pyrrocidine A2 which can be further reduced into pyrrocidine B by an endogenous reductase. The polypeptide is Hybrid PKS-NRPS synthetase pydA (Acremonium sp).